The following is a 422-amino-acid chain: Dihydroorotase (422 aa).

The Zn(2+) site is built by His57 and His59. Substrate-binding positions include 59-61 (HLR) and Asn91. Residues Asp149, His176, and His229 each coordinate Zn(2+). Substrate is bound at residue Asn275. Asp302 contacts Zn(2+). The active site involves Asp302. Substrate contacts are provided by residues His306 and 320–321 (FG).

The protein belongs to the metallo-dependent hydrolases superfamily. DHOase family. Class I DHOase subfamily. The cofactor is Zn(2+).

It carries out the reaction (S)-dihydroorotate + H2O = N-carbamoyl-L-aspartate + H(+). Its pathway is pyrimidine metabolism; UMP biosynthesis via de novo pathway; (S)-dihydroorotate from bicarbonate: step 3/3. Its function is as follows. Catalyzes the reversible cyclization of carbamoyl aspartate to dihydroorotate. This is Dihydroorotase from Endomicrobium trichonymphae.